Consider the following 489-residue polypeptide: Adenylosuccinate synthetase 2, chloroplastic (489 aa).

The transit peptide at 1 to 45 (MPFSPPCLDPAAAAAASLSFLPAAAARPPAPCAVAPRSRRALRVA) directs the protein to the chloroplast. GTP contacts are provided by residues 76-82 (GDEGKGK) and 104-106 (GHT). D77 serves as the catalytic Proton acceptor. Mg(2+) is bound by residues D77 and G104. IMP contacts are provided by residues 77–80 (DEGK), 102–105 (NAGH), T194, R208, Q288, T303, and R367. Residue H105 is the Proton donor of the active site. A substrate-binding site is contributed by 363 to 369 (TTTGRPR). GTP is bound by residues R369, 395–397 (KLD), and 478–480 (GVG).

It belongs to the adenylosuccinate synthetase family. In terms of assembly, homodimer. The cofactor is Mg(2+).

It localises to the plastid. The protein localises to the chloroplast. It catalyses the reaction IMP + L-aspartate + GTP = N(6)-(1,2-dicarboxyethyl)-AMP + GDP + phosphate + 2 H(+). It participates in purine metabolism; AMP biosynthesis via de novo pathway; AMP from IMP: step 1/2. In terms of biological role, plays an important role in the de novo pathway and in the salvage pathway of purine nucleotide biosynthesis. Catalyzes the first committed step in the biosynthesis of AMP from IMP. This chain is Adenylosuccinate synthetase 2, chloroplastic, found in Oryza sativa subsp. japonica (Rice).